The primary structure comprises 624 residues: Chaperone protein HtpG (624 aa).

The segment at 1–341 (MAVKQFKAES…SPDLSLNISR (341 aa)) is a; substrate-binding. A b region spans residues 342–550 (ELLQHDRQLK…DGELSIEMEK (209 aa)). The c stretch occupies residues 551-624 (VLKMMPDNNN…FANDVASLMK (74 aa)).

Belongs to the heat shock protein 90 family. Homodimer.

It localises to the cytoplasm. Functionally, molecular chaperone. Has ATPase activity. This Clostridium acetobutylicum (strain ATCC 824 / DSM 792 / JCM 1419 / IAM 19013 / LMG 5710 / NBRC 13948 / NRRL B-527 / VKM B-1787 / 2291 / W) protein is Chaperone protein HtpG.